Consider the following 425-residue polypeptide: Queuine tRNA-ribosyltransferase accessory subunit 2 (425 aa).

The segment at 302–323 (QNGAQDLEKNSPEEDQEEEVVK) is disordered. Zn(2+)-binding residues include cysteine 351, cysteine 353, cysteine 356, and histidine 382.

Belongs to the queuine tRNA-ribosyltransferase family. QTRT2 subfamily. As to quaternary structure, heterodimer of a catalytic subunit QTRT1 and an accessory subunit QTRT2. It depends on Zn(2+) as a cofactor.

The protein localises to the cytoplasm. The protein resides in the mitochondrion outer membrane. Its function is as follows. Non-catalytic subunit of the queuine tRNA-ribosyltransferase (TGT) that catalyzes the base-exchange of a guanine (G) residue with queuine (Q) at position 34 (anticodon wobble position) in tRNAs with GU(N) anticodons (tRNA-Asp, -Asn, -His and -Tyr), resulting in the hypermodified nucleoside queuosine (7-(((4,5-cis-dihydroxy-2-cyclopenten-1-yl)amino)methyl)-7-deazaguanosine). The protein is Queuine tRNA-ribosyltransferase accessory subunit 2 of Gallus gallus (Chicken).